The sequence spans 314 residues: 2,3-dihydroxyphenylpropionate/2,3-dihydroxicinnamic acid 1,2-dioxygenase (314 aa).

Histidine 115 serves as the catalytic Proton donor. Histidine 179 (proton acceptor) is an active-site residue.

Belongs to the LigB/MhpB extradiol dioxygenase family. As to quaternary structure, homotetramer. It depends on Fe(2+) as a cofactor.

The catalysed reaction is 3-(2,3-dihydroxyphenyl)propanoate + O2 = (2Z,4E)-2-hydroxy-6-oxonona-2,4-dienedioate + H(+). The enzyme catalyses (2E)-3-(2,3-dihydroxyphenyl)prop-2-enoate + O2 = (2Z,4E,7E)-2-hydroxy-6-oxonona-2,4,7-trienedioate + H(+). It participates in aromatic compound metabolism; 3-phenylpropanoate degradation. Functionally, catalyzes the non-heme iron(II)-dependent oxidative cleavage of 2,3-dihydroxyphenylpropionic acid and 2,3-dihydroxicinnamic acid into 2-hydroxy-6-ketononadienedioate and 2-hydroxy-6-ketononatrienedioate, respectively. This chain is 2,3-dihydroxyphenylpropionate/2,3-dihydroxicinnamic acid 1,2-dioxygenase, found in Escherichia coli O139:H28 (strain E24377A / ETEC).